The sequence spans 370 residues: DNA replication and repair protein RecF (370 aa).

30–37 contributes to the ATP binding site; the sequence is GENAQGKT.

Belongs to the RecF family.

It is found in the cytoplasm. The RecF protein is involved in DNA metabolism; it is required for DNA replication and normal SOS inducibility. RecF binds preferentially to single-stranded, linear DNA. It also seems to bind ATP. The protein is DNA replication and repair protein RecF of Bacillus velezensis (strain DSM 23117 / BGSC 10A6 / LMG 26770 / FZB42) (Bacillus amyloliquefaciens subsp. plantarum).